Reading from the N-terminus, the 698-residue chain is DNA ligase (698 aa).

Residues 40–44 (DGEYD), 89–90 (SL), and E123 contribute to the NAD(+) site. The active-site N6-AMP-lysine intermediate is the K125. Positions 146, 184, 300, and 324 each coordinate NAD(+). 4 residues coordinate Zn(2+): C418, C421, C436, and C442. The region spanning 620–698 (AGDSPLAGKT…EAEFRAMSGG (79 aa)) is the BRCT domain.

Belongs to the NAD-dependent DNA ligase family. LigA subfamily. The cofactor is Mg(2+). Mn(2+) serves as cofactor.

The enzyme catalyses NAD(+) + (deoxyribonucleotide)n-3'-hydroxyl + 5'-phospho-(deoxyribonucleotide)m = (deoxyribonucleotide)n+m + AMP + beta-nicotinamide D-nucleotide.. DNA ligase that catalyzes the formation of phosphodiester linkages between 5'-phosphoryl and 3'-hydroxyl groups in double-stranded DNA using NAD as a coenzyme and as the energy source for the reaction. It is essential for DNA replication and repair of damaged DNA. This is DNA ligase from Rhodospirillum rubrum (strain ATCC 11170 / ATH 1.1.1 / DSM 467 / LMG 4362 / NCIMB 8255 / S1).